Consider the following 159-residue polypeptide: Ribosome maturation factor RimP (159 aa).

The protein belongs to the RimP family.

It is found in the cytoplasm. Required for maturation of 30S ribosomal subunits. This Trichlorobacter lovleyi (strain ATCC BAA-1151 / DSM 17278 / SZ) (Geobacter lovleyi) protein is Ribosome maturation factor RimP.